Consider the following 128-residue polypeptide: L-ectoine synthase (128 aa).

This sequence belongs to the ectoine synthase family.

It carries out the reaction (2S)-4-acetamido-2-aminobutanoate = L-ectoine + H2O. The protein operates within amine and polyamine biosynthesis; ectoine biosynthesis; L-ectoine from L-aspartate 4-semialdehyde: step 3/3. Catalyzes the circularization of gamma-N-acetyl-alpha,gamma-diaminobutyric acid (ADABA) to ectoine (1,4,5,6-tetrahydro-2-methyl-4-pyrimidine carboxylic acid), which is an excellent osmoprotectant. The protein is L-ectoine synthase of Vibrio campbellii (strain ATCC BAA-1116).